The following is a 182-amino-acid chain: Ribosome maturation factor RimM (182 aa).

Residues 102-182 (EEGDYYWKDL…TIEVDWDPGF (81 aa)) form the PRC barrel domain.

This sequence belongs to the RimM family. As to quaternary structure, binds ribosomal protein uS19.

It localises to the cytoplasm. An accessory protein needed during the final step in the assembly of 30S ribosomal subunit, possibly for assembly of the head region. Essential for efficient processing of 16S rRNA. May be needed both before and after RbfA during the maturation of 16S rRNA. It has affinity for free ribosomal 30S subunits but not for 70S ribosomes. This Salmonella enteritidis PT4 (strain P125109) protein is Ribosome maturation factor RimM.